Reading from the N-terminus, the 133-residue chain is uncharacterized protein (133 aa).

Belongs to the ycf68 family.

It localises to the plastid. It is found in the chloroplast. This is an uncharacterized protein from Oryza sativa subsp. japonica (Rice).